Reading from the N-terminus, the 418-residue chain is MTTPLTAFGHDPWWLVLGKALAIFVFLMLNVLVAILLERKILGWMQLRPGPNRVGPWGVLQSLADGIKLALKETITPGGVDKFVYFAAPVISTIPAFTAFAFIPFGPVVSVFGHRTPLQLTDLPVAVLFILGLSAIGVYGIVLGGWASGSTYPLLGGVRSTAQVISYEVAMGLSFAAVFLYAGSMSTSQIVAAQDRVWFVFLLLPSFVIYLISMVGETNRAPFDLPEAEGELVAGFHTEYSSLKFAMFMLAEYVNMMTVSSLATALFFGGWHAPWPLNMWAGANTGWWPVLWFTAKMWTFLFIYFWLRASLPRLRYDQFMGLGWKLLIPASLVWVLIAAVIRTLQNQGYAHWTPILVISSIVFAAALVLSLRKPFTTPHIRALRRAAAPPGQAAAHRAGFHPGIPDTAAAGESAGGRE.

Transmembrane regions (helical) follow at residues 15 to 35 (LVLG…LVAI), 83 to 103 (FVYF…FAFI), 123 to 143 (LPVA…GIVL), 164 to 184 (VISY…YAGS), 197 to 217 (VWFV…MVGE), 262 to 282 (LATA…MWAG), 287 to 307 (WWPV…YFWL), 321 to 341 (GLGW…AAVI), and 349 to 369 (YAHW…ALVL). A disordered region spans residues 394–418 (AAHRAGFHPGIPDTAAAGESAGGRE).

Belongs to the complex I subunit 1 family. In terms of assembly, NDH-1 is composed of 14 different subunits. Subunits NuoA, H, J, K, L, M, N constitute the membrane sector of the complex.

It localises to the cell membrane. The enzyme catalyses a quinone + NADH + 5 H(+)(in) = a quinol + NAD(+) + 4 H(+)(out). In terms of biological role, NDH-1 shuttles electrons from NADH, via FMN and iron-sulfur (Fe-S) centers, to quinones in the respiratory chain. The immediate electron acceptor for the enzyme in this species is believed to be menaquinone. Couples the redox reaction to proton translocation (for every two electrons transferred, four hydrogen ions are translocated across the cytoplasmic membrane), and thus conserves the redox energy in a proton gradient. This subunit may bind ubiquinone. In Mycobacterium avium (strain 104), this protein is NADH-quinone oxidoreductase subunit H.